We begin with the raw amino-acid sequence, 143 residues long: S-protein homolog 11 (143 aa).

An N-terminal signal peptide occupies residues 1–20; sequence MNCFSFSFIIIVLCAGSSNA.

It belongs to the plant self-incompatibility (S1) protein family.

Its subcellular location is the secreted. This chain is S-protein homolog 11, found in Arabidopsis thaliana (Mouse-ear cress).